The primary structure comprises 213 residues: Large ribosomal subunit protein uL18c (213 aa).

It belongs to the universal ribosomal protein uL18 family.

The protein resides in the plastid. Its subcellular location is the apicoplast. The chain is Large ribosomal subunit protein uL18c (RPL18) from Plasmodium falciparum (isolate 3D7).